The primary structure comprises 1439 residues: CLIP-associated protein (1439 aa).

Met-1 is modified (N-acetylmethionine). 4 HEAT repeats span residues 1–32 (MEEALEMARAKDTKERMAAVERLHQLLEASRK), 36–74 (PAEVTSLVDSCLDLLKDSNFRVSQGALQALASAAVLAGE), 77–115 (KLHLNALVPAVVERLGDSKQPVRDAARRLLTTLMEVSSP), and 154–192 (LPLQRVILAPILQMLNDPNQAVREAAILCIEEMYMQGGS). Positions 238 to 264 (KASSVNPKKSSPRAKAPTRENSLFGGD) are disordered. 5 HEAT repeats span residues 281-319 (KELIREFEKIAATLVPEKDWSMRISAMRRVEGLVAGGAT), 325-363 (RGLLKQLVGPLSTQLADRRSTIVKQACHLLCLLSKELLG), 366-401 (EACAETFIPVLFKLVVITVLVIAESADNCIKTMLRN), 402-439 (CKAARVLPRIAESAKHDRNAILRARCCEYALLTLEHWP), and 486-525 (RRLFSSFDPVIQRLINEEDGGIHRRHASPSVRERHSQPSF). Disordered regions lie at residues 503 to 539 (EDGGIHRRHASPSVRERHSQPSFSQTSAPSNLPGYGT), 611 to 660 (SSSL…NGGL), and 672 to 715 (SKDS…SNDA). Over residues 522–532 (QPSFSQTSAPS) the composition is skewed to polar residues. The segment covering 632–649 (APASNSHTSSAAAESTHS) has biased composition (low complexity). Residues 672-696 (SKDSGRSSYRGNLLSESHPTFSSLT) are compositionally biased toward polar residues. The span at 699–715 (RGSERNERSSLEESNDA) shows a compositional bias: basic and acidic residues. HEAT repeat units follow at residues 809-830 (RVAAFNFLQTLLQQGPKGAQEV), 831-869 (IQSFEKVMKLFLRHLDDPHHKVAQAALSTLADLIPSCRK), 872-910 (ESYMERVLPHVFSRLIDPKEVVRQPCSSTLEIVSKTYSV), 912-950 (SLLPALLRSLDEQRSPKAKLAVIEFAINSFNRYAGNPEI), 954-992 (SGILKLWLAKLTPLTRDKNTKLKEASITCIISVYNHYDS), and 994-1031 (GLLNYILSLSVEEQNSLRRALKQYTPRIEVDLLNYMQS). A compositionally biased stretch (polar residues) spans 1074–1088 (DSDSGRKWSSSQEPT). The interval 1074–1101 (DSDSGRKWSSSQEPTMITGGVGQNVSSG) is disordered. 6 HEAT repeats span residues 1201–1239 (TPESGPSIPQILHMINGSDGSPSSSKKSGLQQLIEASVA), 1246–1284 (TKYFNQILTVVLEVLDDEDFSIKELALSLISEMLKSQKD), 1287–1325 (EDSVEIVIEKLLHVSKDTVPKVSTEAEQCLTTVLSQYDP), 1327–1360 (RCLSVIVPLLVTEDEKTLVACINCLTKLVGRLSQ), 1364–1402 (MDQLSSFLPAVFEAFGSQSADVRKTVVFCLVDIYIMLGK), and 1405–1439 (LPYLEGLNSTQVRLVTIYANRISQARNGAPIDADT).

Belongs to the CLASP family. In terms of tissue distribution, expressed at a low level in all tissues, mostly in young developing tissues.

Its subcellular location is the cytoplasm. The protein localises to the cytoskeleton. The protein resides in the spindle. It localises to the phragmoplast. It is found in the cell cortex. In terms of biological role, cortical microtubule plus-end tracking protein required for cell morphogenesis and cell division. Promotes the stabilization of dynamic microtubules during mitosis. Regulates microtubule-cortex attachment, thereby contributing to self-organization of cortical microtubules and subsequent cell shape. This Arabidopsis thaliana (Mouse-ear cress) protein is CLIP-associated protein (CLASP).